The sequence spans 419 residues: Protein FAM217A (419 aa).

Disordered regions lie at residues 1-23 (MGRKSNESCSANPHSSSISQENL), 100-119 (DKRNSSVEENVTDESDLSES), 234-298 (PSSS…SRSL), and 362-388 (PIPLSFPENPREEVKVPRTKKKCHRKS). Over residues 7–23 (ESCSANPHSSSISQENL) the composition is skewed to polar residues. Residues 284 to 298 (SLSTAGKSKSNSRSL) are compositionally biased toward polar residues. Positions 378–388 (PRTKKKCHRKS) are enriched in basic residues.

The protein belongs to the FAM217 family.

The chain is Protein FAM217A (Fam217a) from Rattus norvegicus (Rat).